The chain runs to 224 residues: Large ribosomal subunit protein uL1 (224 aa).

This sequence belongs to the universal ribosomal protein uL1 family. In terms of assembly, part of the 50S ribosomal subunit.

Functionally, binds directly to 23S rRNA. The L1 stalk is quite mobile in the ribosome, and is involved in E site tRNA release. In terms of biological role, protein L1 is also a translational repressor protein, it controls the translation of the L11 operon by binding to its mRNA. The protein is Large ribosomal subunit protein uL1 of Borrelia hermsii (strain HS1 / DAH).